The primary structure comprises 59 residues: Large ribosomal subunit protein bL32 (59 aa).

Positions Met-1 to Asn-15 are enriched in basic residues. Residues Met-1–Met-48 are disordered.

The protein belongs to the bacterial ribosomal protein bL32 family.

The chain is Large ribosomal subunit protein bL32 from Opitutus terrae (strain DSM 11246 / JCM 15787 / PB90-1).